A 188-amino-acid polypeptide reads, in one-letter code: MNSNFCRALVDRGPPGGMQLGVVAPAGQTPLAATEPLSNVPFLLYPGHSEPPYYDAYTGVFPYVPFPGAFGVYDYPFEPAFIQKRNERERQRVKCVNEGYARLRGHLPGALTEKRLSKVETLRAAIRYIKYLQELLSATPDGAPPPATSPPPAHTGHSNVPQPSSLVAESSGSPFSSSPFLESEEPSL.

The segment at 80 to 93 (AFIQKRNERERQRV) is basic motif. In terms of domain architecture, bHLH spans 80–132 (AFIQKRNERERQRVKCVNEGYARLRGHLPGALTEKRLSKVETLRAAIRYIKYL). The tract at residues 94–132 (KCVNEGYARLRGHLPGALTEKRLSKVETLRAAIRYIKYL) is helix-loop-helix motif. The segment at 139 to 188 (TPDGAPPPATSPPPAHTGHSNVPQPSSLVAESSGSPFSSSPFLESEEPSL) is disordered. A compositionally biased stretch (pro residues) spans 142–153 (GAPPPATSPPPA). Polar residues predominate over residues 158–168 (SNVPQPSSLVA). Over residues 169-181 (ESSGSPFSSSPFL) the composition is skewed to low complexity.

In terms of assembly, interacts with transcription factor TCF3/E12. In terms of tissue distribution, expressed in teeth (at protein level).

It is found in the nucleus. Its function is as follows. Transcription factor. Probably binds E-box motifs 5'-CANNTG-3' in complex with transcription factor TCF3/E12. Negatively modulates transcription of target genes such as CDH1/E-cadherin, perhaps by recruiting the PRC2 repressive complex to regulatory elements. Regulates ameloblast development and tooth germ growth, perhaps acting by positively modulating migration of inner enamel epithelium (IEE) cells. Plays a role in enamel formation. The sequence is that of Achaete-scute homolog 5 from Mus musculus (Mouse).